We begin with the raw amino-acid sequence, 513 residues long: ATP synthase subunit alpha (513 aa).

169–176 provides a ligand contact to ATP; sequence GDRQIGKT.

It belongs to the ATPase alpha/beta chains family. As to quaternary structure, F-type ATPases have 2 components, CF(1) - the catalytic core - and CF(0) - the membrane proton channel. CF(1) has five subunits: alpha(3), beta(3), gamma(1), delta(1), epsilon(1). CF(0) has three main subunits: a(1), b(2) and c(9-12). The alpha and beta chains form an alternating ring which encloses part of the gamma chain. CF(1) is attached to CF(0) by a central stalk formed by the gamma and epsilon chains, while a peripheral stalk is formed by the delta and b chains.

The protein localises to the cell inner membrane. It catalyses the reaction ATP + H2O + 4 H(+)(in) = ADP + phosphate + 5 H(+)(out). Functionally, produces ATP from ADP in the presence of a proton gradient across the membrane. The alpha chain is a regulatory subunit. The chain is ATP synthase subunit alpha from Francisella tularensis subsp. mediasiatica (strain FSC147).